The primary structure comprises 577 residues: Jasmonoyl--L-amino acid synthetase JAR4 (577 aa).

Ser99 provides a ligand contact to ATP. Residue Ser102 coordinates jasmonate. ATP contacts are provided by residues Met119, Thr122, Gly163, Asn168, and 331–336 (GSSEGW). 166–170 (TTNVY) lines the an L-alpha-amino acid pocket. 328–331 (ADYG) provides a ligand contact to jasmonate. 531–535 (KILDH) is an an L-alpha-amino acid binding site.

The protein belongs to the IAA-amido conjugating enzyme family.

The catalysed reaction is a jasmonate + an L-alpha-amino acid + ATP = a jasmonyl-L-amino acid + AMP + diphosphate + H(+). In terms of biological role, catalyzes the synthesis of jasmonate-amino acid conjugates by adenylation. Catalyzes the conjugation of jasmonate (JA) to Ile, Leu and Val. Catalyzes the conjugation of jasmonate (JA) to Ile to mediate defense signaling and resistance to the herbivore Manduca sexta caterpillars. The sequence is that of Jasmonoyl--L-amino acid synthetase JAR4 from Nicotiana attenuata (Coyote tobacco).